The sequence spans 300 residues: Putative S-adenosyl-L-methionine-dependent methyltransferase MUL_0817 (300 aa).

S-adenosyl-L-methionine is bound by residues D127 and 156–157 (DL).

The protein belongs to the UPF0677 family.

In terms of biological role, exhibits S-adenosyl-L-methionine-dependent methyltransferase activity. This is Putative S-adenosyl-L-methionine-dependent methyltransferase MUL_0817 from Mycobacterium ulcerans (strain Agy99).